Here is a 545-residue protein sequence, read N- to C-terminus: Solute carrier family 22 member 6 (545 aa).

The Cytoplasmic segment spans residues 1-9 (MAFNDLLKQ). Residues 10 to 30 (VGGVGRFQLIQVTMVVAPLLL) traverse the membrane as a helical segment. At 31-129 (MASHNTLQNF…LVCSHRAFRQ (99 aa)) the chain is on the extracellular side. N-linked (GlcNAc...) asparagine glycosylation is found at Asn39, Asn56, Asn86, Asn91, and Asn107. A helical transmembrane segment spans residues 130–150 (LAQSLFMVGVLLGAMMFGYLA). Residues 151 to 157 (DRLGRRK) lie on the Cytoplasmic side of the membrane. The helical transmembrane segment at 158–177 (VLILNYLQTAVSGTCAAYAP) threads the bilayer. The N-linked (GlcNAc...) asparagine glycan is linked to Asn178. The Extracellular portion of the chain corresponds to 178–180 (NYT). A helical membrane pass occupies residues 181 to 201 (VYCIFRLLSGMSLASIAINCM). Topologically, residues 202–218 (TLNMEWMPIHTRAYVGT) are cytoplasmic. A helical transmembrane segment spans residues 219-239 (LIGYVYSLGQFLLAGIAYAVP). Residues 240–242 (HWR) are Extracellular-facing. The chain crosses the membrane as a helical span at residues 243 to 263 (HLQLAVSVPFFVAFIYSWFFI). At 264–331 (ESARWYSSSG…ELLRCPTLRR (68 aa)) the chain is on the cytoplasmic side. A helical membrane pass occupies residues 332 to 352 (LFLCLSMLWFATSFAYYGLVM). Over 353–362 (DLQGFGVSMY) the chain is Extracellular. A helical transmembrane segment spans residues 363–383 (LIQVIFGAVDLPAKFVCFLVI). At 384–389 (NSMGRR) the chain is on the cytoplasmic side. A helical transmembrane segment spans residues 390–410 (PAQLASLLLAGICILVNGIIP). At 411–419 (RGHTIIRTS) the chain is on the extracellular side. A helical membrane pass occupies residues 420-440 (LAVLGKGCLASSFNCIFLYTG). The Cytoplasmic portion of the chain corresponds to 441 to 450 (ELYPTMIRQT). The helical transmembrane segment at 451–471 (GLGMGSTMARVGSIVSPLISM) threads the bilayer. Topologically, residues 472–478 (TAEFYPS) are extracellular. The helical transmembrane segment at 479–499 (IPLFIFGAVPVAASAVTALLP) threads the bilayer. Residues 500-545 (ETLGQPLPDTVQDLKSRSRGKQKQQQLEQQKQMIPLQVSTQEKNGL) are Cytoplasmic-facing. The disordered stretch occupies residues 515 to 545 (SRSRGKQKQQQLEQQKQMIPLQVSTQEKNGL). Low complexity predominate over residues 522–531 (KQQQLEQQKQ). Over residues 536–545 (QVSTQEKNGL) the composition is skewed to polar residues.

The protein belongs to the major facilitator (TC 2.A.1) superfamily. Organic cation transporter (TC 2.A.1.19) family. Post-translationally, glycosylated. Glycosylation is necessary for proper targeting of the transporter to the plasma membrane. As to expression, expressed in kidney. In kidney, restricted to the proximal convoluted tubule (representing S1 and S2 segments). In brain, expressed in neurons of the cortex cerebri and hippocampus as well as in the ependymal cell layer of the choroid plexus.

It is found in the basolateral cell membrane. The protein localises to the basal cell membrane. It carries out the reaction (6R)-L-erythro-5,6,7,8-tetrahydrobiopterin(out) + a dicarboxylate(in) = (6R)-L-erythro-5,6,7,8-tetrahydrobiopterin(in) + a dicarboxylate(out). The catalysed reaction is L-erythro-7,8-dihydrobiopterin(out) + a dicarboxylate(in) = L-erythro-7,8-dihydrobiopterin(in) + a dicarboxylate(out). The enzyme catalyses L-sepiapterin(out) + a dicarboxylate(in) = L-sepiapterin(in) + a dicarboxylate(out). It catalyses the reaction prostaglandin F2alpha(out) + a dicarboxylate(in) = prostaglandin F2alpha(in) + a dicarboxylate(out). It carries out the reaction prostaglandin E2(out) + a dicarboxylate(in) = prostaglandin E2(in) + a dicarboxylate(out). The catalysed reaction is 3',5'-cyclic AMP(out) + a dicarboxylate(in) = 3',5'-cyclic AMP(in) + a dicarboxylate(out). The enzyme catalyses 3',5'-cyclic GMP(out) + a dicarboxylate(in) = 3',5'-cyclic GMP(in) + a dicarboxylate(out). It catalyses the reaction urate(out) + a dicarboxylate(in) = urate(in) + a dicarboxylate(out). It carries out the reaction kynurenate(out) + glutarate(in) = kynurenate(in) + glutarate(out). The catalysed reaction is (indol-3-yl)acetate(out) + a dicarboxylate(in) = (indol-3-yl)acetate(in) + a dicarboxylate(out). The enzyme catalyses indoxyl sulfate(out) + a dicarboxylate(in) = indoxyl sulfate(in) + a dicarboxylate(out). It catalyses the reaction N-benzoylglycine(out) + a dicarboxylate(in) = N-benzoylglycine(in) + a dicarboxylate(out). It carries out the reaction 3-carboxy-4-methyl-5-propyl-2-furanpropanoate(out) + a dicarboxylate(in) = 3-carboxy-4-methyl-5-propyl-2-furanpropanoate(in) + a dicarboxylate(out). Its function is as follows. Secondary active transporter that functions as a Na(+)-independent organic anion (OA)/dicarboxylate antiporter where the uptake of one molecule of OA into the cell is coupled with an efflux of one molecule of intracellular dicarboxylate such as 2-oxoglutarate or glutarate. Mediates the uptake of OA across the basolateral side of proximal tubule epithelial cells, thereby contributing to the renal elimination of endogenous OA from the systemic circulation into the urine. Functions as a biopterin transporters involved in the uptake and the secretion of coenzymes tetrahydrobiopterin (BH4), dihydrobiopterin (BH2) and sepiapterin to urine, thereby determining baseline levels of blood biopterins. Transports prostaglandin E2 (PGE2) and prostaglandin F2-alpha (PGF2-alpha) and may contribute to their renal excretion. Involved in the transport of neuroactive tryptophan metabolites kynurenate (KYNA) and xanthurenate (XA). May transport glutamate. Also involved in the disposition of uremic toxins and potentially toxic xenobiotics by the renal organic anion secretory pathway, helping reduce their undesired toxicological effects on the body. Uremic toxins include the indoxyl sulfate (IS), hippurate/N-benzoylglycine (HA), indole acetate (IA) and 3-carboxy-4- methyl-5-propyl-2-furanpropionate(CMPF) and urate. Xenobiotics include the mycotoxin ochratoxin (OTA). May also contribute to the transport of organic compounds in testes across the blood-testis-barrier. This Mus musculus (Mouse) protein is Solute carrier family 22 member 6.